Consider the following 417-residue polypeptide: NADH-quinone oxidoreductase subunit D (417 aa).

Belongs to the complex I 49 kDa subunit family. In terms of assembly, NDH-1 is composed of 14 different subunits. Subunits NuoB, C, D, E, F, and G constitute the peripheral sector of the complex.

It localises to the cell inner membrane. It catalyses the reaction a quinone + NADH + 5 H(+)(in) = a quinol + NAD(+) + 4 H(+)(out). Functionally, NDH-1 shuttles electrons from NADH, via FMN and iron-sulfur (Fe-S) centers, to quinones in the respiratory chain. The immediate electron acceptor for the enzyme in this species is believed to be ubiquinone. Couples the redox reaction to proton translocation (for every two electrons transferred, four hydrogen ions are translocated across the cytoplasmic membrane), and thus conserves the redox energy in a proton gradient. The sequence is that of NADH-quinone oxidoreductase subunit D from Methylobacillus flagellatus (strain ATCC 51484 / DSM 6875 / VKM B-1610 / KT).